Reading from the N-terminus, the 167-residue chain is Crossover junction endodeoxyribonuclease RuvC (167 aa).

Residues D11, E71, and D143 contribute to the active site. Mg(2+) is bound by residues D11, E71, and D143.

It belongs to the RuvC family. In terms of assembly, homodimer which binds Holliday junction (HJ) DNA. The HJ becomes 2-fold symmetrical on binding to RuvC with unstacked arms; it has a different conformation from HJ DNA in complex with RuvA. In the full resolvosome a probable DNA-RuvA(4)-RuvB(12)-RuvC(2) complex forms which resolves the HJ. The cofactor is Mg(2+).

The protein resides in the cytoplasm. It catalyses the reaction Endonucleolytic cleavage at a junction such as a reciprocal single-stranded crossover between two homologous DNA duplexes (Holliday junction).. Its function is as follows. The RuvA-RuvB-RuvC complex processes Holliday junction (HJ) DNA during genetic recombination and DNA repair. Endonuclease that resolves HJ intermediates. Cleaves cruciform DNA by making single-stranded nicks across the HJ at symmetrical positions within the homologous arms, yielding a 5'-phosphate and a 3'-hydroxyl group; requires a central core of homology in the junction. The consensus cleavage sequence is 5'-(A/T)TT(C/G)-3'. Cleavage occurs on the 3'-side of the TT dinucleotide at the point of strand exchange. HJ branch migration catalyzed by RuvA-RuvB allows RuvC to scan DNA until it finds its consensus sequence, where it cleaves and resolves the cruciform DNA. This chain is Crossover junction endodeoxyribonuclease RuvC, found in Hyphomonas neptunium (strain ATCC 15444).